A 308-amino-acid polypeptide reads, in one-letter code: Coenzyme PQQ synthesis protein B (308 aa).

It belongs to the PqqB family.

It functions in the pathway cofactor biosynthesis; pyrroloquinoline quinone biosynthesis. Its function is as follows. May be involved in the transport of PQQ or its precursor to the periplasm. The chain is Coenzyme PQQ synthesis protein B from Klebsiella pneumoniae (strain 342).